We begin with the raw amino-acid sequence, 315 residues long: Probable mannose-6-phosphate isomerase GmuF (315 aa).

Residues Q95, H97, E115, and H172 each contribute to the Zn(2+) site. R192 is an active-site residue.

Belongs to the mannose-6-phosphate isomerase type 1 family. It depends on Zn(2+) as a cofactor.

The enzyme catalyses D-mannose 6-phosphate = D-fructose 6-phosphate. Seems to be involved in the degradation of glucomannan. The chain is Probable mannose-6-phosphate isomerase GmuF (gmuF) from Bacillus subtilis (strain 168).